The following is a 419-amino-acid chain: Probable dual-specificity RNA methyltransferase RlmN (419 aa).

A disordered region spans residues methionine 1–arginine 21. Glutamate 124 acts as the Proton acceptor in catalysis. Residues tyrosine 130 to arginine 369 enclose the Radical SAM core domain. An intrachain disulfide couples cysteine 137 to cysteine 375. Positions 144, 148, and 151 each coordinate [4Fe-4S] cluster. S-adenosyl-L-methionine is bound by residues glycine 199–glutamate 200, serine 233, serine 256–histidine 258, and asparagine 332. Cysteine 375 serves as the catalytic S-methylcysteine intermediate. A disordered region spans residues alanine 383–arginine 419. The segment covering serine 397 to arginine 419 has biased composition (low complexity).

Belongs to the radical SAM superfamily. RlmN family. Requires [4Fe-4S] cluster as cofactor.

It localises to the cytoplasm. It catalyses the reaction adenosine(2503) in 23S rRNA + 2 reduced [2Fe-2S]-[ferredoxin] + 2 S-adenosyl-L-methionine = 2-methyladenosine(2503) in 23S rRNA + 5'-deoxyadenosine + L-methionine + 2 oxidized [2Fe-2S]-[ferredoxin] + S-adenosyl-L-homocysteine. It carries out the reaction adenosine(37) in tRNA + 2 reduced [2Fe-2S]-[ferredoxin] + 2 S-adenosyl-L-methionine = 2-methyladenosine(37) in tRNA + 5'-deoxyadenosine + L-methionine + 2 oxidized [2Fe-2S]-[ferredoxin] + S-adenosyl-L-homocysteine. Its function is as follows. Specifically methylates position 2 of adenine 2503 in 23S rRNA and position 2 of adenine 37 in tRNAs. This is Probable dual-specificity RNA methyltransferase RlmN from Frankia alni (strain DSM 45986 / CECT 9034 / ACN14a).